The primary structure comprises 89 residues: Small ribosomal subunit protein uS15 (89 aa).

Belongs to the universal ribosomal protein uS15 family. In terms of assembly, part of the 30S ribosomal subunit. Forms a bridge to the 50S subunit in the 70S ribosome, contacting the 23S rRNA.

In terms of biological role, one of the primary rRNA binding proteins, it binds directly to 16S rRNA where it helps nucleate assembly of the platform of the 30S subunit by binding and bridging several RNA helices of the 16S rRNA. Functionally, forms an intersubunit bridge (bridge B4) with the 23S rRNA of the 50S subunit in the ribosome. This Serratia proteamaculans (strain 568) protein is Small ribosomal subunit protein uS15.